Here is a 141-residue protein sequence, read N- to C-terminus: Cytochrome c-type biogenesis protein CcmE (141 aa).

The Cytoplasmic portion of the chain corresponds to 1–7 (MQRKHKR). A helical; Signal-anchor for type II membrane protein transmembrane segment spans residues 8 to 28 (ILFVAVSFIALGCVSAFVLFE). Topologically, residues 29 to 141 (LSKSISFFCT…SSDAAVIGSS (113 aa)) are periplasmic. Positions 121 and 125 each coordinate heme.

It belongs to the CcmE/CycJ family.

The protein localises to the cell inner membrane. Functionally, heme chaperone required for the biogenesis of c-type cytochromes. Transiently binds heme delivered by CcmC and transfers the heme to apo-cytochromes in a process facilitated by CcmF and CcmH. This Anaplasma phagocytophilum (strain HZ) protein is Cytochrome c-type biogenesis protein CcmE.